A 265-amino-acid chain; its full sequence is Gamma-secretase subunit APH-1A (265 aa).

At 1–2 the chain is on the lumenal side; that stretch reads MG. Residues 3–23 form a helical membrane-spanning segment; the sequence is AAVFFGCTFVAFGPAFSLFLI. The Cytoplasmic segment spans residues 24 to 31; the sequence is TVAGDPLR. A helical transmembrane segment spans residues 32–52; that stretch reads VIILVAGAFFWLVSLLLASVV. Over 53 to 68 the chain is Lumenal; the sequence is WFILVHVTDRSDARLQ. The chain crosses the membrane as a helical span at residues 69-89; the sequence is YGLLIFGAAVSVLLQEVFRFA. At 90-118 the chain is on the cytoplasmic side; the sequence is YYKLLKKADEGLASLSEDGRSPISIRQMA. The chain crosses the membrane as a helical span at residues 119–139; it reads YVSGLSFGIISGVFSVINILA. Residues 140 to 158 are Lumenal-facing; sequence DALGPGVVGIHGDSPYYFL. Residues 159-179 traverse the membrane as a helical segment; that stretch reads TSAFLTAAIILLHTFWGVVFF. Residues 180–186 are Cytoplasmic-facing; the sequence is DACERRR. Residues 187–207 form a helical membrane-spanning segment; sequence YWALGLVVGSHLLTSGLTFLN. At 208–213 the chain is on the lumenal side; the sequence is PWYEAS. A helical transmembrane segment spans residues 214-234; that stretch reads LLPIYAVTVSMGLWAFITAGG. The Cytoplasmic portion of the chain corresponds to 235 to 265; it reads SLRSIQRSLSCRRQEDSRVMVYSALRIPPED.

The protein belongs to the APH-1 family. The functional gamma-secretase complex is composed of at least four polypeptides: a presenilin homodimer (PSEN1 or PSEN2), nicastrin (NCSTN), APH1 (APH1A or APH1B) and PSENEN/PEN2.

The protein resides in the endoplasmic reticulum membrane. Its subcellular location is the golgi apparatus. The protein localises to the golgi stack membrane. In terms of biological role, non-catalytic subunit of the gamma-secretase complex, an endoprotease complex that catalyzes the intramembrane cleavage of integral membrane proteins such as Notch receptors and APP (amyloid-beta precursor protein). Required for normal gamma-secretase assembly. The gamma-secretase complex plays a role in Notch and Wnt signaling cascades and regulation of downstream processes via its role in processing key regulatory proteins, and by regulating cytosolic CTNNB1 levels. The chain is Gamma-secretase subunit APH-1A (Aph1a) from Mus musculus (Mouse).